A 535-amino-acid chain; its full sequence is Berberine bridge enzyme-like 3 (535 aa).

The first 19 residues, 1–19 (MKEALFGLYLVLLVSGLEA), serve as a signal peptide directing secretion. Cysteines 32 and 95 form a disulfide. Asparagine 52 is a glycosylation site (N-linked (GlcNAc...) asparagine). The region spanning 73-247 (NNKNLLAIVV…LSWKINLVEV (175 aa)) is the FAD-binding PCMH-type domain. Positions 110–172 (HDNEGLSYVS…QTLAFPAGIC (63 aa)) form a cross-link, 6-(S-cysteinyl)-8alpha-(pros-histidyl)-FAD (His-Cys). 8 N-linked (GlcNAc...) asparagine glycosylation sites follow: asparagine 214, asparagine 257, asparagine 292, asparagine 321, asparagine 341, asparagine 415, asparagine 439, and asparagine 444.

This sequence belongs to the oxygen-dependent FAD-linked oxidoreductase family. FAD is required as a cofactor. Post-translationally, the FAD cofactor is bound via a bicovalent 6-S-cysteinyl, 8alpha-N1-histidyl FAD linkage.

Its subcellular location is the endoplasmic reticulum. It localises to the cell membrane. The protein resides in the secreted. The protein localises to the cell wall. Its function is as follows. Flavin-dependent oxidoreductase involved in the biosynthetic pathway to 4-hydroxyindole-3-carbonyl nitrile (4-OH-ICN), a cyanogenic metabolite required for inducible pathogen defense. Converts indole cyanohydrin into indole-3-carbonyl nitrile (ICN). This is Berberine bridge enzyme-like 3 from Arabidopsis thaliana (Mouse-ear cress).